A 541-amino-acid polypeptide reads, in one-letter code: Protein wntless homolog (541 aa).

The signal sequence occupies residues 1–42 (MAGAIIENMSTRKLCIVGGILLVFQVIAFLVGGLIAPSPTTA). Residues 43–232 (VPYMSVKCID…GIHQNGGFTK (190 aa)) lie on the Lumenal side of the membrane. Residues 233–253 (VWFAMKTFLTPSILIIMVWYW) form a helical membrane-spanning segment. The Cytoplasmic portion of the chain corresponds to 254 to 268 (RRITLMTRAPVLLEK). The helical transmembrane segment at 269-289 (VIFALGISMTFINIPVEWFSI) threads the bilayer. Topologically, residues 290-303 (GFDWTWMLLFGDIR) are lumenal. The chain crosses the membrane as a helical span at residues 304 to 324 (QGIFYAMLLSFWIIFCGEHMM). Residues 325 to 331 (DQNERNR) are Cytoplasmic-facing. A helical membrane pass occupies residues 332 to 352 (LSGYWKQVGPIAVGSFCLFIF). Residues 353–380 (DMCERGVQLKNPFYSIWTTEVGTELAMA) lie on the Lumenal side of the membrane. Residues 381 to 401 (FIIVAGICLCLYFLFLCFMVF) traverse the membrane as a helical segment. At 402–431 (QVFRNISGKQSSLPAMSKARRLHYEGLIFR) the chain is on the cytoplasmic side. Residues 432–452 (FKFLMLITLACAAMTVIFFIV) form a helical membrane-spanning segment. At 453–471 (SQVTEGHWKWGDITIQVNS) the chain is on the lumenal side. The helical transmembrane segment at 472–492 (AFFTGIYGMWNLYVFALMFLY) threads the bilayer. The Cytoplasmic segment spans residues 493-541 (APSHKNYGEDQSNGDLGVSSGEELQLTTTITHVDGPTEVYKLARKEAQE).

Belongs to the wntless family.

The protein resides in the golgi apparatus membrane. The protein localises to the cytoplasmic vesicle membrane. Its function is as follows. May play an essential role in Wnt signaling pathway. May be required for Wnt-dependent patterning processes. The polypeptide is Protein wntless homolog (WLS) (Gallus gallus (Chicken)).